Here is a 381-residue protein sequence, read N- to C-terminus: Alkanesulfonate monooxygenase (381 aa).

Belongs to the SsuD family. Homotetramer.

It carries out the reaction an alkanesulfonate + FMNH2 + O2 = an aldehyde + FMN + sulfite + H2O + 2 H(+). Its function is as follows. Catalyzes the desulfonation of aliphatic sulfonates. The polypeptide is Alkanesulfonate monooxygenase (Escherichia coli O6:K15:H31 (strain 536 / UPEC)).